Consider the following 577-residue polypeptide: Arginine--tRNA ligase (577 aa).

The short motif at proline 122–histidine 132 is the 'HIGH' region element.

Belongs to the class-I aminoacyl-tRNA synthetase family. In terms of assembly, monomer.

It is found in the cytoplasm. It catalyses the reaction tRNA(Arg) + L-arginine + ATP = L-arginyl-tRNA(Arg) + AMP + diphosphate. This Escherichia coli (strain ATCC 8739 / DSM 1576 / NBRC 3972 / NCIMB 8545 / WDCM 00012 / Crooks) protein is Arginine--tRNA ligase.